The primary structure comprises 765 residues: SNF-related serine/threonine-protein kinase (765 aa).

Residues 16-269 (YDLDKTLGRG…LEEIENHPWL (254 aa)) form the Protein kinase domain. Residues 22 to 30 (LGRGHFAVV) and Lys-45 contribute to the ATP site. The active-site Proton acceptor is Asp-139. Phosphoserine is present on Ser-162. Thr-173 is subject to Phosphothreonine; by LKB1. The UBA domain occupies 291-334 (SEEEHNSIIQRMVLGDIADRDAIVEALETNRYNHITATYFLLAE). Ser-362, Ser-390, Ser-482, Ser-495, and Ser-518 each carry phosphoserine. The tract at residues 512–634 (LKMNIASPGT…RCAGPSNSMQ (123 aa)) is disordered. Over residues 522-532 (VHKRYHRRKSQ) the composition is skewed to basic residues. Residues 533–542 (GRGSSCSSSE) show a composition bias toward low complexity. Residue Arg-534 is modified to Omega-N-methylarginine. The span at 549–558 (ESRRRLDKDS) shows a compositional bias: basic and acidic residues. A compositionally biased stretch (gly residues) spans 603–614 (AGGGSPSSGSGG). Phosphoserine is present on Ser-607.

It belongs to the protein kinase superfamily. CAMK Ser/Thr protein kinase family. Requires Mg(2+) as cofactor. Post-translationally, autophosphorylated. Phosphorylation on Thr-173 by STK11/LKB1 in complex with STE20-related adapter-alpha (STRADA) pseudo kinase and CAB39. As to expression, expressed in hematopoietic progenitor cells and leukemic cell lines. Weakly expressed in the testis.

It localises to the nucleus. It carries out the reaction L-seryl-[protein] + ATP = O-phospho-L-seryl-[protein] + ADP + H(+). The enzyme catalyses L-threonyl-[protein] + ATP = O-phospho-L-threonyl-[protein] + ADP + H(+). Its activity is regulated as follows. Activated by phosphorylation on Thr-173. In terms of biological role, may play a role in hematopoietic cell proliferation or differentiation. Potential mediator of neuronal apoptosis. This Homo sapiens (Human) protein is SNF-related serine/threonine-protein kinase.